The chain runs to 228 residues: Probable transcriptional regulatory protein SilR (228 aa).

The Response regulatory domain occupies 2–116; the sequence is KILIVEDDIK…ELLARVRTLL (115 aa). 4-aspartylphosphate is present on Asp51. The segment at residues 125–225 is a DNA-binding region (ompR/PhoB-type); sequence ESQLKVADLS…VRGVGYMLEI (101 aa).

Post-translationally, phosphorylated by SilS.

The protein localises to the cytoplasm. In terms of biological role, component of the sil cation-efflux system that confers resistance to silver. Probable member of a two-component regulatory system SilS/SilR. This chain is Probable transcriptional regulatory protein SilR (silR), found in Salmonella typhimurium.